Reading from the N-terminus, the 108-residue chain is UPF0060 membrane protein Mfla_0485 (108 aa).

A run of 4 helical transmembrane segments spans residues 7 to 27 (FSLF…PYLW), 33 to 53 (SVWL…LLSL), 63 to 83 (AAYG…VDGI), and 87 to 107 (TWDF…MFAP).

The protein belongs to the UPF0060 family.

The protein resides in the cell inner membrane. The polypeptide is UPF0060 membrane protein Mfla_0485 (Methylobacillus flagellatus (strain ATCC 51484 / DSM 6875 / VKM B-1610 / KT)).